The chain runs to 84 residues: Small ribosomal subunit protein bS20 (84 aa).

Over residues 62 to 72 (KNKARRLKSRA) the composition is skewed to basic residues. The tract at residues 62 to 84 (KNKARRLKSRAARWSNSATAASR) is disordered. Residues 75–84 (WSNSATAASR) show a composition bias toward polar residues.

Belongs to the bacterial ribosomal protein bS20 family.

Functionally, binds directly to 16S ribosomal RNA. The polypeptide is Small ribosomal subunit protein bS20 (Mycoplasmoides gallisepticum (strain R(low / passage 15 / clone 2)) (Mycoplasma gallisepticum)).